A 307-amino-acid chain; its full sequence is uncharacterized protein (307 aa).

This is an uncharacterized protein from Archaeoglobus fulgidus (strain ATCC 49558 / DSM 4304 / JCM 9628 / NBRC 100126 / VC-16).